The primary structure comprises 412 residues: MGKPQETILIIGAGIAGLTASRLPTNNGIPNIVFEASTPERNQGFAISLQEFGYSSLLAALGDLPLSNLTRGVAPDRQIGGTGWIDQALRDNRTGELLVAPDLTTMKQTIVRANRNALRHWIADCGEDELDVRYGHKLRRIEGKLGDITAVFENHAKYKGSLVIAADGVNSTTRSQILPNVIPETIPLIHYHGEFQVSHSAFDKLIRPHSGHSNILVGVGDRFNTPLSICNVTKTKVHLDWSYSRPVKGENDTLYRPNVPSEEAKQIPPALLEELDALSLAEPWKNFLNSESLKTHRVFHWTTRCVYITQDDARRAGEQGVVFVGDSWHAMPIFGGEGGNHALLDGVELANAIIKSTASGGKDGWDNVVKSYYAGAWKRSQEAVRRSTQRFFLLHRPAKEWKEISEKKKKPA.

The N-terminal stretch at 1-21 (MGKPQETILIIGAGIAGLTAS) is a signal peptide. Positions 35 and 46 each coordinate FAD. N-linked (GlcNAc...) asparagine glycosylation is found at Asn68 and Asn92. Residue Arg119 coordinates FAD. Residues Asn170, Asn231, and Asn251 are each glycosylated (N-linked (GlcNAc...) asparagine). The FAD site is built by Asp326 and Gly339.

This sequence belongs to the paxM FAD-dependent monooxygenase family. Requires FAD as cofactor.

It participates in secondary metabolite biosynthesis. In terms of biological role, FAD-dependent monooxygenase; part of the gene cluster that mediates the biosynthesis of neosartoricin B, a prenylated anthracenone that probably exhibits T-cell antiproliferative activity, suggestive of a physiological role as an immunosuppressive agent. The non-reducing polyketide synthase nscA probably synthesizes and cyclizes the decaketide backbone. The hydrolase nscB then mediates the product release through hydrolysis followed by spontaneous decarboxylation. The prenyltransferase nscD catalyzes the addition of the dimethylallyl group to the aromatic C5. The FAD-dependent monooxygenase nscC is then responsible for the stereospecific hydroxylation at C2. Neosartoricin B can be converted into two additional compounds neosartoricins C and D. Neosartoricin C is a spirocyclic compound that is cyclized through the attack of C3 hydroxyl on C14, followed by dehydration. On the other hand, neosartoricin D is a further cyclized compound in which attack of C2 on C14 in neosartoricin C results in the formation of the acetal-containing dioxabicyclo-octanone ring. Both of these compounds are novel and possibly represent related metabolites of the gene cluster. In Trichophyton rubrum (strain ATCC MYA-4607 / CBS 118892) (Athlete's foot fungus), this protein is FAD-dependent monooxygenase nscC.